Here is a 412-residue protein sequence, read N- to C-terminus: Subtilisin-like protease 6 (412 aa).

Residues 1–20 (MGFITKAIPIVLAALSTVNG) form the signal peptide. Positions 21–127 (ARILEAGPHA…VRTTTNGTNL (107 aa)) are excised as a propeptide. Positions 36 to 120 (KYIVVMKKDV…FIEPDFVVRT (85 aa)) constitute an Inhibitor I9 domain. One can recognise a Peptidase S8 domain in the interval 135-412 (SWGLARVGSK…SKLIYNGSGK (278 aa)). Residues Asp167 and His198 each act as charge relay system in the active site. Residues Asn252 and Asn264 are each glycosylated (N-linked (GlcNAc...) asparagine). Ser358 serves as the catalytic Charge relay system. A glycan (N-linked (GlcNAc...) asparagine) is linked at Asn408.

It belongs to the peptidase S8 family.

The protein localises to the secreted. In terms of biological role, secreted subtilisin-like serine protease with keratinolytic activity that contributes to pathogenicity. This is Subtilisin-like protease 6 (SUB6) from Arthroderma benhamiae (strain ATCC MYA-4681 / CBS 112371) (Trichophyton mentagrophytes).